The primary structure comprises 215 residues: MSDINNNEPAENIEQPKQEPEDGNNSMSVDEQPETSSTNLPTGDNLAPMSVESPAHLNNEDSPKSDDSRERHGSNYVIEPHLELRDMAKDKTLENFLAQMDDYSPLIPDVLLDYYLSLSGFKCVDPRLKKLLGLTAQKFISDVAQDAYQYSKIRTGSSNASSTTFGAQNFGAGGASGIGSSGRRGDRGKTVLTVDDLSAALNEYGINLKRPDFFR.

The disordered stretch occupies residues 1 to 77 (MSDINNNEPA…SRERHGSNYV (77 aa)). A compositionally biased stretch (polar residues) spans 23-42 (GNNSMSVDEQPETSSTNLPT). Positions 58 to 73 (NNEDSPKSDDSRERHG) are enriched in basic and acidic residues. Residues 58 to 203 (NNEDSPKSDD…VDDLSAALNE (146 aa)) enclose the Histone-fold domain.

This sequence belongs to the TAF10 family. Component of the 1.8 MDa SAGA (Spt-Ada-Gcn5 acetyltransferase) complex, which is composed of 19 subunits tra1, spt7, taf5, ngg1/ada3, sgf73, spt20, spt8, taf12, taf6, hfi1/ada1, ubp8, gcn5, ada2, spt3, sgf29, taf10, taf9, sgf11 and sus1. The SAGA complex is composed of 4 modules, namely the HAT (histone acetyltransferase) module (gcn5, ada2, ngg1/ada3 and sgf29), the DUB (deubiquitinating) module (ubp8, sgf11, sgf73 and sus1), the core or TAF (TBP-associated factor) module (taf5, taf6, taf9, taf10 and taf12), and the Tra1 or SPT (Suppressor of Ty) module (tra1, hfi1/ada1, spt3, spt7, spt8 and spt20). The Tra1/SPT module binds activators, the core module recruits TBP (TATA-binding protein), the HAT module contains the histone H3 acetyltransferase gcn5, and the DUB module comprises the histone H2B deubiquitinase ubp8. Component of the 1.2 MDa TFIID complex, which is composed of TATA-binding protein (TBP) and the 14 TBP-associated factors (TAFs). It comprises 1 copy of each taf1, taf2, taf3, taf7, taf8, taf11, taf13, 2 copies of each taf4, taf5, taf6, taf9, taf10, taf12, and 3 copies of taf14. In TFIID, taf10 heterodimerizes with taf3 and taf8.

Its subcellular location is the nucleus. Functionally, functions as a component of both the DNA-binding general transcription initiation factor complex TFIID and the transcription coactivator SAGA complex. Binding of TFIID to a promoter (with or without TATA element) is the initial step in pre-initiation complex (PIC) formation. TFIID plays a key role in the regulation of gene expression by RNA polymerase II through different activities such as transcription activator interaction, core promoter recognition and selectivity, TFIIA and TFIIB interaction, chromatin modification (histone acetylation by TAF1), facilitation of DNA opening and initiation of transcription. SAGA acts as a general cofactor required for essentially all RNA polymerase II transcription. At the promoters, SAGA is required for transcription pre-initiation complex (PIC) recruitment. It influences RNA polymerase II transcriptional activity through different activities such as TBP interaction (via core/TAF module) and promoter selectivity, interaction with transcription activators (via Tra1/SPT module), and chromatin modification through histone acetylation (via HAT module) and deubiquitination (via DUB module). SAGA preferentially acetylates histones H3 (to form H3K9ac, H3K14ac, H3K18ac and H3K23ac) and H2B and deubiquitinates histone H2B. SAGA interacts with DNA via upstream activating sequences (UASs). In Schizosaccharomyces pombe (strain 972 / ATCC 24843) (Fission yeast), this protein is SAGA complex/transcription factor TFIID complex subunit Taf10.